A 187-amino-acid polypeptide reads, in one-letter code: Ribulose bisphosphate carboxylase small subunit, chloroplastic (187 aa).

Residues 1 to 56 constitute a chloroplast transit peptide; it reads MASSVMSTATVATGANAAQASMIASFNGLKSAASFPVTRKQDLDITSIASNGGRVE.

The protein belongs to the RuBisCO small chain family. As to quaternary structure, heterohexadecamer of 8 large and 8 small subunits.

It localises to the plastid. The protein resides in the chloroplast. RuBisCO catalyzes two reactions: the carboxylation of D-ribulose 1,5-bisphosphate, the primary event in carbon dioxide fixation, as well as the oxidative fragmentation of the pentose substrate. Both reactions occur simultaneously and in competition at the same active site. Although the small subunit is not catalytic it is essential for maximal activity. The chain is Ribulose bisphosphate carboxylase small subunit, chloroplastic from Capsicum annuum (Capsicum pepper).